The sequence spans 328 residues: N-acetyl-gamma-glutamyl-phosphate reductase (328 aa).

C143 is a catalytic residue.

The protein belongs to the NAGSA dehydrogenase family. Type 1 subfamily.

It is found in the cytoplasm. It catalyses the reaction N-acetyl-L-glutamate 5-semialdehyde + phosphate + NADP(+) = N-acetyl-L-glutamyl 5-phosphate + NADPH + H(+). The protein operates within amino-acid biosynthesis; L-arginine biosynthesis; N(2)-acetyl-L-ornithine from L-glutamate: step 3/4. Its function is as follows. Catalyzes the NADPH-dependent reduction of N-acetyl-5-glutamyl phosphate to yield N-acetyl-L-glutamate 5-semialdehyde. The protein is N-acetyl-gamma-glutamyl-phosphate reductase of Methanoregula boonei (strain DSM 21154 / JCM 14090 / 6A8).